Reading from the N-terminus, the 735-residue chain is Delta-1-pyrroline-5-carboxylate synthase 2 (735 aa).

A glutamate 5-kinase region spans residues M1–R315. Substrate is bound by residues S79, D176, and N195. ATP is bound by residues S215 to D216, Y221 to S226, and R255 to K261. Residues E316 to Q735 form a gamma-glutamyl phosphate reductase region.

It in the N-terminal section; belongs to the glutamate 5-kinase family. The protein in the C-terminal section; belongs to the gamma-glutamyl phosphate reductase family.

The catalysed reaction is L-glutamate + ATP = L-glutamyl 5-phosphate + ADP. The enzyme catalyses L-glutamate 5-semialdehyde + phosphate + NADP(+) = L-glutamyl 5-phosphate + NADPH + H(+). The protein operates within amino-acid biosynthesis; L-proline biosynthesis; L-glutamate 5-semialdehyde from L-glutamate: step 1/2. It participates in amino-acid biosynthesis; L-proline biosynthesis; L-glutamate 5-semialdehyde from L-glutamate: step 2/2. Feedback regulated by proline. Functionally, P5CS plays a key role in proline biosynthesis, leading to osmoregulation in plants. Involved in abiotic stress tolerance. The sequence is that of Delta-1-pyrroline-5-carboxylate synthase 2 from Oryza sativa subsp. japonica (Rice).